The sequence spans 324 residues: uncharacterized protein (324 aa).

The region spanning 1-58 is the HTH lysR-type domain; it reads MDIKVMEYAAEIARRQSFTKAAEHLHIAQPSLSQQIKKLEAELGLTLFHRSHGSVTLT. A DNA-binding region (H-T-H motif) is located at residues 18–37; that stretch reads FTKAAEHLHIAQPSLSQQIK.

This sequence belongs to the LysR transcriptional regulatory family.

This is an uncharacterized protein from Bacillus subtilis (strain 168).